Reading from the N-terminus, the 411-residue chain is LIM domain-binding protein 1 (411 aa).

At serine 2 the chain carries N-acetylserine. Threonine 61 carries the post-translational modification Phosphothreonine. Serine 265 and serine 302 each carry phosphoserine. Disordered regions lie at residues 283-330 (APPA…TFAL) and 367-411 (DAAN…QASQ). The span at 302–318 (SGGSTMSSGGGNTNNSN) shows a compositional bias: low complexity. An LIM interaction domain (LID) domain is found at 336–375 (DVMVVGEPTLMGGEFGDEDERLITRLENTQFDAANGIDDE).

Belongs to the LDB family. In terms of assembly, interacts with ESR1. Forms homodimers and heterodimers. Interacts with and activates LHX1/LIM1. Interacts with the LIM domains of ISL1 and LMO2. Can assemble in a complex with LMO2 and TAL1/SCL but does not interact with TAL1/SCL directly. Strongly interacts with the LIM2 domain of LMX1A and more weakly with the LIM1 domain. Homodimerization is not required for, and does not effect, LMX1A-binding. Component of a nuclear TAL-1 complex composed at least of CBFA2T3, LDB1, TAL1 and TCF3. Interacts with LHX6 and LHX9. At neuronal promoters, forms a complex with LHX3 involved in the specification of interneurons, in motor neurons, it is displaced by ISL1 to form a ternary complex in which ISL1 contacts both LHX3 and LDB1. Interacts with SLK; leading to negatively regulate SLK kinase activity. Interacts with YWHAZ. Interacts with PRDM1/BLIMP1. Interacts with LMO4. Interacts with RLIM/RNF12; the interaction inhibits the ubiquitination of LMO proteins. In terms of processing, ubiquitinated by RLIM/RNF12, leading to its degradation by the proteasome. Expressed in a wide range of adult tissues including brain, heart, skeletal muscle, colon, thymus, spleen, kidney, liver, small intestine, lung and peripheral blood leukocytes.

It is found in the nucleus. Functionally, binds to the LIM domain of a wide variety of LIM domain-containing transcription factors. May regulate the transcriptional activity of LIM-containing proteins by determining specific partner interactions. Plays a role in the development of interneurons and motor neurons in cooperation with LHX3 and ISL1. Acts synergistically with LHX1/LIM1 in axis formation and activation of gene expression. Acts with LMO2 in the regulation of red blood cell development, maintaining erythroid precursors in an immature state. The chain is LIM domain-binding protein 1 (LDB1) from Homo sapiens (Human).